Consider the following 295-residue polypeptide: Bifunctional protein FolD (295 aa).

NADP(+) is bound by residues 164-166 (GRS), Ser-193, and Ile-234.

It belongs to the tetrahydrofolate dehydrogenase/cyclohydrolase family. As to quaternary structure, homodimer.

The enzyme catalyses (6R)-5,10-methylene-5,6,7,8-tetrahydrofolate + NADP(+) = (6R)-5,10-methenyltetrahydrofolate + NADPH. The catalysed reaction is (6R)-5,10-methenyltetrahydrofolate + H2O = (6R)-10-formyltetrahydrofolate + H(+). It participates in one-carbon metabolism; tetrahydrofolate interconversion. Functionally, catalyzes the oxidation of 5,10-methylenetetrahydrofolate to 5,10-methenyltetrahydrofolate and then the hydrolysis of 5,10-methenyltetrahydrofolate to 10-formyltetrahydrofolate. In Flavobacterium johnsoniae (strain ATCC 17061 / DSM 2064 / JCM 8514 / BCRC 14874 / CCUG 350202 / NBRC 14942 / NCIMB 11054 / UW101) (Cytophaga johnsonae), this protein is Bifunctional protein FolD.